Reading from the N-terminus, the 244-residue chain is Probable histone-lysine N-methyltransferase set-23 (244 aa).

Positions 25 to 86 (EGCNCEAECS…SCRNRVVQCG (62 aa)) constitute a Pre-SET domain. 9 residues coordinate Zn(2+): Cys27, Cys29, Cys33, Cys39, Cys41, Cys65, Cys69, Cys71, and Cys78. Positions 89-213 (KKLEIFSTCE…RGEELCYDYG (125 aa)) constitute an SET domain. S-adenosyl-L-methionine is bound by residues 101-103 (KGF), Asp141, Tyr143, Arg170, and 173-174 (NH). Zn(2+)-binding residues include Cys176, Cys225, Cys227, and Cys232. Positions 221–237 (NRKLCLCKSEKCRKYLP) constitute a Post-SET domain.

This sequence belongs to the class V-like SAM-binding methyltransferase superfamily. Histone-lysine methyltransferase family. Suvar3-9 subfamily.

Its subcellular location is the nucleus. It localises to the chromosome. The enzyme catalyses L-lysyl-[histone] + S-adenosyl-L-methionine = N(6)-methyl-L-lysyl-[histone] + S-adenosyl-L-homocysteine + H(+). Its function is as follows. Probable histone methyltransferase. Required for embryonic development. The sequence is that of Probable histone-lysine N-methyltransferase set-23 (set-23) from Caenorhabditis elegans.